The primary structure comprises 239 residues: Ribulose-1,5-bisphosphate 5-phosphatase (239 aa).

The active-site Nucleophile is the D8. Positions 8, 10, and 184 each coordinate Mg(2+). Catalysis depends on D10, which acts as the Proton donor. The interval 205 to 239 is disordered; that stretch reads PSEESDATESADRAATERQADHSIDTLGELTDLVS. The span at 214–228 shows a compositional bias: basic and acidic residues; sequence SADRAATERQADHSI.

This sequence belongs to the HAD-like hydrolase superfamily. The cofactor is Mg(2+). Requires Mn(2+) as cofactor. It depends on Co(2+) as a cofactor. Ni(2+) is required as a cofactor.

It catalyses the reaction D-ribulose 1,5-bisphosphate + H2O = D-ribulose 1-phosphate + phosphate. Requires both monovalent and divalent ions for optimal activity. Optimal KCl concentration is higher than 2.5 M. In terms of biological role, phosphatase involved in the non-carboxylating pentose bisphosphate pathway, a nucleoside degradation pathway present in some halophilic archaea. Catalyzes the dephosphorylation of ribulose 1,5-bisphosphate (RuBP) to ribulose 1-phosphate (Ru1P). Shows a strict substrate specificity toward RuBP. In Halopiger xanaduensis (strain DSM 18323 / JCM 14033 / SH-6), this protein is Ribulose-1,5-bisphosphate 5-phosphatase.